The chain runs to 134 residues: UPF0357 protein AAL017W (134 aa).

Positions 1–23 are cleaved as a signal peptide; the sequence is MFGLISLWHLFWLAVMAGILVVA.

Belongs to the UPF0357 family.

This is UPF0357 protein AAL017W from Eremothecium gossypii (strain ATCC 10895 / CBS 109.51 / FGSC 9923 / NRRL Y-1056) (Yeast).